Reading from the N-terminus, the 216-residue chain is Transmembrane emp24 domain-containing protein eca (216 aa).

An N-terminal signal peptide occupies residues Met-1 to Gly-20. The Lumenal portion of the chain corresponds to Leu-21–Ser-182. In terms of domain architecture, GOLD spans Arg-30–Val-126. The stretch at Ala-134–Asn-164 forms a coiled coil. A helical membrane pass occupies residues Arg-183–Met-203. The Cytoplasmic portion of the chain corresponds to Arg-204 to Val-216. The Prevents secretion from ER signature appears at Lys-213 to Val-216.

Belongs to the EMP24/GP25L family.

It is found in the endoplasmic reticulum membrane. Eca and bai are essential, though not redundant, for dorsoventral patterning of the embryo. Specifically required during early embryogenesis for the activity of maternal tkv, while the zygotic tkv is not affected. Involved in Golgi organization. The polypeptide is Transmembrane emp24 domain-containing protein eca (Drosophila ananassae (Fruit fly)).